Consider the following 385-residue polypeptide: Putative transporter YthQ (385 aa).

8 helical membrane passes run 24 to 44 (AVID…FVIY), 67 to 87 (WLYA…FLME), 106 to 128 (YALL…IVLP), 133 to 155 (SVLI…HIFF), 176 to 193 (TLVR…IVFT), 197 to 214 (LLAL…IRSL), 304 to 324 (AFTV…LLVY), and 365 to 385 (ILHY…LLFT).

Its subcellular location is the cell membrane. This Bacillus subtilis (strain 168) protein is Putative transporter YthQ (ythQ).